Consider the following 148-residue polypeptide: uncharacterized protein (148 aa).

Residues 37–94 (NNNNYNNNNKNNNNNNNNNNNNNNNNNNNNNNNYINSCNSNNNNNNNNNNTKNNNINS) are compositionally biased toward low complexity. Residues 37 to 99 (NNNNYNNNNK…NNINSRTDKN (63 aa)) are disordered.

This is an uncharacterized protein from Dictyostelium discoideum (Social amoeba).